The chain runs to 679 residues: Recombination repair protein 1 (679 aa).

Residues 1 to 407 form a disordered region; the sequence is MPRVKAVKKQ…TKKAKKAETK (407 aa). The segment covering 45–55 has biased composition (basic residues); it reads AKGKPRARKAT. Over residues 106–116 the composition is skewed to basic and acidic residues; the sequence is ATAEAEPEPKV. 2 positions are modified to phosphothreonine: Thr-133 and Thr-140. Residue Ser-142 is modified to Phosphoserine. Composition is skewed to basic and acidic residues over residues 179–189 and 203–214; these read EPPKQRARKEA and SKEKVQKAETAA. A Phosphoserine modification is found at Ser-258. Residues 312-347 show a composition bias toward basic and acidic residues; it reads KKEGKEPAPGKKQKKSADKENGVVEEEAKPSTETKP. The tract at residues 428 to 679 is AP endonuclease; the sequence is KICSWNVAGL…HCPITIFFNI (252 aa). Glu-461 serves as a coordination point for Mg(2+). Tyr-533 is an active-site residue. Mg(2+)-binding residues include Asp-572, Asn-574, and Asp-669. Catalysis depends on Asp-572, which acts as the Proton donor/acceptor.

This sequence belongs to the DNA repair enzymes AP/ExoA family. In terms of assembly, interacts with the zeta DNA polymerase complex; interacts (via the N-terminus) with the accessory subunit PolZ2/Rev7 and also interacts with the catalytic component PolZ1, however the interaction with PolZ1 is likely via PolZ2. Requires Mg(2+) as cofactor. Mn(2+) serves as cofactor.

Its subcellular location is the nucleus. The enzyme catalyses Exonucleolytic cleavage in the 3'- to 5'-direction to yield nucleoside 5'-phosphates.. Functionally, plays a role in the cellular response to oxidative stress by promoting DNA repair mechanisms such as base excision repair and possibly homologous recombination repair. Functions as an apurinic/apyrimidinic (AP) endodeoxyribonuclease in the DNA base excision repair (BER) pathway of DNA lesions induced by oxidative and alkylating agents. Likely to initiate repair of AP sites in DNA by catalyzing hydrolytic incision of the phosphodiester backbone immediately adjacent to the damage, generating a single-strand break with 5'-deoxyribose phosphate and 3'-hydroxyl ends. Has a 3'-5' exoribonuclease activity on mismatched deoxyribonucleotides at the 3' termini of nicked or gapped DNA molecules during short-patch BER. Has apurinic endonuclease and double-stranded DNA 3'-exonuclease activities and carries out single-stranded DNA renaturation in a Mg(2+)-dependent manner. Activity is more efficient in purine-rich regions of dsDNA than in pyrimidine-rich regions. This is Recombination repair protein 1 from Drosophila melanogaster (Fruit fly).